The sequence spans 218 residues: MGQKINPLGFRLGTTQGHHSLWFSQPKNYSEGLQEDQKIRDCIKNYVQKNMRTSSGVEGIARIEIQKRIDLIQVIIFMGFPKLLIESRPRGIEELQTTLQKEFHCVNRKLNIAVTRIAKPYGNPNILAEFIAGQLKNRVSFRKAMKKAIELTEQADTKGIQIQIAGRIDGKEIARVEWIREGRVPLQTIRAKIDYCSYTVRTIYGVLGIKIWIFLDEE.

The region spanning 47–118 is the KH type-2 domain; the sequence is VQKNMRTSSG…KLNIAVTRIA (72 aa).

This sequence belongs to the universal ribosomal protein uS3 family. In terms of assembly, part of the 30S ribosomal subunit.

It localises to the plastid. The protein localises to the chloroplast. This is Small ribosomal subunit protein uS3c (rps3) from Nicotiana sylvestris (Wood tobacco).